The chain runs to 295 residues: HTH-type transcriptional regulator ShiR (295 aa).

Residues Met1–Thr58 enclose the HTH lysR-type domain. The segment at residues Phe18 to Arg37 is a DNA-binding region (H-T-H motif).

It belongs to the LysR transcriptional regulatory family.

Functionally, activates expression of the shikimate transporter ShiA in the presence of shikimate. Binds to the shiA promoter region. This is HTH-type transcriptional regulator ShiR from Corynebacterium glutamicum (strain R).